The primary structure comprises 1168 residues: MLEGPILAVSRQTSLTSGIPGATKRYSFAKIKEPIEVPGLLDLQRDSFAWLIGAPEWRAKKQAESEEGARITSGLEDILEELSPIEDYSGNMSLTLSEPRFDDVKNTIDEAKDKDINYSAPLYVTAEFTNAMSGEIKSQTVFIGDFPMMTDKGTFIINGTERVIVSQLVRSPGVYFDESIDKSTERPLHSVKVIPSRGAWLEFDIDKRDTVGVRIDRKRRQPVTVLLKALGLSTQDITDRFGFSELMMSTLEHDGVANTDEALLEIYRKQRPGESPTRDSAQALLDNSFFNPKRYDLAKVGRYKVNRKLGLGGGSTTGEHTLTEEDILTTIEYLVRLHAGERTMESPDGTELMIATDDIDHFGNRRLRTVGELVQNQVRVGLSRMERVVRERMTTQDAESITPTSLINVRPVSAAIREFFGTSQLSQFMDQNNSLSGLTHKRRLSALGPGGLSRERAGLDVRDVHASHYGRMCPIETPEGPNIGLIGSLASYARVNPFGFIETPYRRVENGQATDVVDYLTADEEDRHIVAQANTKMDSEGRFVEDTVEVRMKGGNVEVVPASEVDYMDVSPRQMVSVATAMIPFLEHDDANRALMGANMQRQAVPLLRNEAPFVGTGMELRAAHDAGDVVIARRSGVVETVCADFITTLGDDGQRDTFLLRKFERTNQGTCYNQKPLVEAGDRIEEGQALADGPGTENGEMALGRNLLVAFMPWEGHNYEDAIILNQRIVEEDVLTSIHIEEHEIDARDTKLGPEEITRDIPNASEDILADLDERGIVRIGADVRDGDILVGKVTPKGETELTPEERLLRAIFGEKAREVRDTSMKVPHGETGKVIGVRVFSREDDDDLAPGVNQMVRVYVAQKRKIQDGDKLSGRHGNKGVVGKILPAEDMPFLPDGTPVDVILNTHGVPRRMNIGQVLELHLGMLAKSGWKVDPESQDPAIKAMLETLPEDLYDVPADSRVATPVFDGTTNEELSGLMRSSRPNRDGDQMVNEFGKSTLIDGRTGEPFQQPISVGYMYMLKLHHLVDEKIHARSTGPYSMITQQPLGGKAQFGGQRFGEMEVWAMQAYGAAYTLQELLTIKSDDVVGRVKVYEAIVKGDNIPDPGIPESFKVLLKELQSLCLNVEVLSADGTPVDLGADDDDLDQANASLGINLSRDERFDADAV.

The protein belongs to the RNA polymerase beta chain family. The RNAP catalytic core consists of 2 alpha, 1 beta, 1 beta' and 1 omega subunit. When a sigma factor is associated with the core the holoenzyme is formed, which can initiate transcription.

The catalysed reaction is RNA(n) + a ribonucleoside 5'-triphosphate = RNA(n+1) + diphosphate. Functionally, DNA-dependent RNA polymerase catalyzes the transcription of DNA into RNA using the four ribonucleoside triphosphates as substrates. This is DNA-directed RNA polymerase subunit beta from Corynebacterium kroppenstedtii (strain DSM 44385 / JCM 11950 / CIP 105744 / CCUG 35717).